A 199-amino-acid chain; its full sequence is Probable adenylyl-sulfate kinase (199 aa).

Residue 34-41 participates in ATP binding; the sequence is GLSGSGKS. Residue S108 is the Phosphoserine intermediate of the active site.

Belongs to the APS kinase family.

It catalyses the reaction adenosine 5'-phosphosulfate + ATP = 3'-phosphoadenylyl sulfate + ADP + H(+). Its pathway is sulfur metabolism; hydrogen sulfide biosynthesis; sulfite from sulfate: step 2/3. Its function is as follows. Catalyzes the synthesis of activated sulfate. The polypeptide is Probable adenylyl-sulfate kinase (yisZ) (Bacillus subtilis (strain 168)).